Reading from the N-terminus, the 327-residue chain is MSAGCDFVALYNGQKIPLIGLGTWKSEPGQVKEAVKYALSVGYRHVDCAAAYSNEAEIGDAFQECVGPNKVIKREDLFVTSKLWNTKHHPEDVEPALRKTLADLKLDYLDLYLMHWPHAFERGDNLFPKNPDGTMRYDYTDYKDTWKAMEKLVEKGLAKAIGLSNFNSRQIDDVLSVATVKPAVLQVECHPYLAQNELIAHCQKRGLVVTAYSPLGSPDRMWKHPDEPVLLEEPGIKKLAEKYKKSPAQILLRWQAQRKVVTIPKSVTPARILQNLQVFDFSLTEEEMSHVGSLNKNWRYIVPMLTVNGKPVPRDAGHPNYPFNDPY.

NADP(+) is bound by residues 13–22, Thr23, Trp24, and Asp47; that span reads GQKIPLIGLG. The Proton donor role is filled by Tyr52. 12 residues coordinate NADP(+): Ser164, Asn165, Ser213, Leu215, Ser217, Lys265, Ser266, Val267, Thr268, Arg271, Gln274, and Asn275.

This sequence belongs to the aldo/keto reductase family.

It is found in the cytoplasm. It localises to the cytosol. The protein resides in the apical cell membrane. The catalysed reaction is a primary alcohol + NADP(+) = an aldehyde + NADPH + H(+). It carries out the reaction S-nitroso-CoA + NADPH + H(+) = sulfinamide-CoA + NADP(+). The enzyme catalyses S-nitrosoglutathione + NADPH + H(+) = S-(hydroxysulfenamide)glutathione + NADP(+). Functionally, catalyzes the NADPH-dependent reduction of a wide variety of carbonyl-containing compounds to their corresponding alcohols. Displays enzymatic activity towards endogenous metabolites such as aromatic and aliphatic aldehydes, ketones, monosaccharides and bile acids. Acts as an aldehyde-detoxification enzyme. Also acts as an inhibitor of protein S-nitrosylation by mediating degradation of S-nitroso-coenzyme A (S-nitroso-CoA), a cofactor required to S-nitrosylate proteins. Also acts as a S-nitroso-glutathione reductase by catalyzing the NADPH-dependent reduction of S-nitrosoglutathione. Displays no reductase activity towards retinoids. The sequence is that of Aldo-keto reductase family 1 member A1 (AKR1A1) from Gallus gallus (Chicken).